Reading from the N-terminus, the 127-residue chain is Large ribosomal subunit protein bL12 (127 aa).

This sequence belongs to the bacterial ribosomal protein bL12 family. Homodimer. Part of the ribosomal stalk of the 50S ribosomal subunit. Forms a multimeric L10(L12)X complex, where L10 forms an elongated spine to which 2 to 4 L12 dimers bind in a sequential fashion. Binds GTP-bound translation factors.

In terms of biological role, forms part of the ribosomal stalk which helps the ribosome interact with GTP-bound translation factors. Is thus essential for accurate translation. The polypeptide is Large ribosomal subunit protein bL12 (Streptomyces griseus subsp. griseus (strain JCM 4626 / CBS 651.72 / NBRC 13350 / KCC S-0626 / ISP 5235)).